A 486-amino-acid polypeptide reads, in one-letter code: Bifunctional protein HldE (486 aa).

Residues 1-331 (MAEHDDGDLI…VDAVKPASGA (331 aa)) are ribokinase. An ATP-binding site is contributed by 208 to 211 (NRRE). Asp277 is an active-site residue. The cytidylyltransferase stretch occupies residues 357–486 (FTNGCFDLLH…TTATVTRLRS (130 aa)).

The protein in the N-terminal section; belongs to the carbohydrate kinase PfkB family. It in the C-terminal section; belongs to the cytidylyltransferase family. Homodimer.

The enzyme catalyses D-glycero-beta-D-manno-heptose 7-phosphate + ATP = D-glycero-beta-D-manno-heptose 1,7-bisphosphate + ADP + H(+). The catalysed reaction is D-glycero-beta-D-manno-heptose 1-phosphate + ATP + H(+) = ADP-D-glycero-beta-D-manno-heptose + diphosphate. It participates in nucleotide-sugar biosynthesis; ADP-L-glycero-beta-D-manno-heptose biosynthesis; ADP-L-glycero-beta-D-manno-heptose from D-glycero-beta-D-manno-heptose 7-phosphate: step 1/4. The protein operates within nucleotide-sugar biosynthesis; ADP-L-glycero-beta-D-manno-heptose biosynthesis; ADP-L-glycero-beta-D-manno-heptose from D-glycero-beta-D-manno-heptose 7-phosphate: step 3/4. In terms of biological role, catalyzes the phosphorylation of D-glycero-D-manno-heptose 7-phosphate at the C-1 position to selectively form D-glycero-beta-D-manno-heptose-1,7-bisphosphate. Functionally, catalyzes the ADP transfer from ATP to D-glycero-beta-D-manno-heptose 1-phosphate, yielding ADP-D-glycero-beta-D-manno-heptose. This Acidiphilium cryptum (strain JF-5) protein is Bifunctional protein HldE.